We begin with the raw amino-acid sequence, 321 residues long: Thymidylate synthase (321 aa).

A disordered region spans residues 1 to 32; that stretch reads MVLTPTKDGPDQESMPLPADNGESPSKQQAPV. Phosphoserine is present on residues serine 24 and serine 26. Tyrosine 39 is subject to Phosphotyrosine. DUMP contacts are provided by residues arginine 56 and 181–182; that span reads RR. The active-site Nucleophile is the cysteine 201. The residue at position 208 (tyrosine 208) is a Phosphotyrosine. Phosphoserine is present on serine 210. DUMP-binding positions include 223-226, asparagine 234, and 264-266; these read RSAD and HVY. Aspartate 226 contributes to the (6R)-5,10-methylene-5,6,7,8-tetrahydrofolate binding site. Position 320 (alanine 320) interacts with (6R)-5,10-methylene-5,6,7,8-tetrahydrofolate.

It belongs to the thymidylate synthase family. As to quaternary structure, homodimer.

It catalyses the reaction dUMP + (6R)-5,10-methylene-5,6,7,8-tetrahydrofolate = 7,8-dihydrofolate + dTMP. Its pathway is pyrimidine metabolism; dTTP biosynthesis. This is Thymidylate synthase (Ts) from Drosophila melanogaster (Fruit fly).